We begin with the raw amino-acid sequence, 887 residues long: E3 ubiquitin-protein ligase NEDD4 (887 aa).

Residues 58 to 183 (EEEHVLFTAD…TENPRMERPY (126 aa)) form the C2 domain. Serine 215 is modified (phosphoserine). Residues 217–549 (DENADQAEEL…LEDSYRRIMG (333 aa)) form a mediates interaction with TNIK region. 3 disordered regions span residues 236 to 257 (PDAA…GWEE), 271 to 290 (ESRR…TDED), and 302 to 322 (FTTR…ESPE). Residues 243–253 (PHPPEPSPLPP) show a composition bias toward pro residues. The 34-residue stretch at 249–282 (SPLPPGWEERQDVLGRTYYVNHESRRTQWKRPSP) folds into the WW 1 domain. Threonine 287 bears the Phosphothreonine mark. At serine 309 the chain carries Phosphoserine. The Nuclear export signal signature appears at 354 to 364 (LAEEFNTRLAV). 2 positions are modified to phosphoserine: serine 380 and serine 385. WW domains are found at residues 405 to 438 (SGLP…KPTM) and 460 to 493 (GPLP…DPRL). Positions 552–887 (RADLLKARLW…ENTQGFDGVD (336 aa)) constitute an HECT domain. Residue lysine 847 forms a Glycyl lysine isopeptide (Lys-Gly) (interchain with G-Cter in ubiquitin) linkage. Cysteine 854 (glycyl thioester intermediate) is an active-site residue.

In terms of assembly, interacts with NDFIP1 and NDFIP2; this interaction activates the E3 ubiquitin-protein ligase and may induce its recruitment to exosomes. Interacts with UBE2D2. Binds, in vitro, through the WW2 and WW3 domains, to neural isoforms of ENAH that contain the PPSY motif. Interacts with BEAN1, LITAF, RNF11, WBP1, WBP2, PMEPAI and PRRG2. Interacts with murine leukemia virus Gag polyprotein (via PPXY motif). Interacts (via C2 domain) with GRB10 (via SH2 domain). Interacts with ERBB4. Interacts with TNIK; the interaction is direct, allows the TNIK-dependent recruitment of RAP2A and its ubiquitination by NEDD4. Interacts (via WW3 domain) with TNK2; EGF promotes this interaction. Interacts (via WW3 domain) with FGFR1 (via C-terminus). Interacts with OTUD7B. Interacts with ISG15. Interacts (via WW domain) with RAPGEF2; this interaction leads to ubiquitination and degradation via the proteasome pathway. Interacts (via WW domains) with ARRDC3 (via PPXY motifs). Interacts with LAPTM4B; may play a role in the lysosomal sorting of LAPTM4B. Interacts with ZBTB7B. Interacts with PRRG4 (via cytoplasmic domain). Interacts directly with LDLRAD3; this interaction promotes NEDD4 auto-ubiquitination. Interacts with ADRB2. Interacts (via WW domains) with DAZAP2 (via PPAY motif). Undergoes 'Lys-29'-linked auto-ubiquitination at Lys-847 and serves as a scaffold for recruiting USP13 to form an NEDD4-USP13 deubiquitination complex. Brain.

The protein resides in the cytoplasm. Its subcellular location is the nucleus. The protein localises to the cell membrane. It carries out the reaction S-ubiquitinyl-[E2 ubiquitin-conjugating enzyme]-L-cysteine + [acceptor protein]-L-lysine = [E2 ubiquitin-conjugating enzyme]-L-cysteine + N(6)-ubiquitinyl-[acceptor protein]-L-lysine.. Its pathway is protein modification; protein ubiquitination. With respect to regulation, activated by NDFIP1- and NDFIP2-binding. In terms of biological role, E3 ubiquitin-protein ligase which accepts ubiquitin from an E2 ubiquitin-conjugating enzyme in the form of a thioester and then directly transfers the ubiquitin to targeted substrates. Specifically ubiquitinates 'Lys-63' in target proteins. Monoubiquitinates IGF1R at multiple sites, thus leading to receptor internalization and degradation in lysosomes. Ubiquitinates FGFR1, leading to receptor internalization and degradation in lysosomes. Involved in ubiquitination of ERBB4 intracellular domain E4ICD1. Predominantly involved in ubiquitination of membrane bound forms of ERBB4 rather than processed precursors and intermediate membrane-anchored 80 kDa fragments (m80HER4), with a lesser role in ubiquitination of ERBB4 intracellular domain E4ICD1. Promotes ubiquitination of RAPGEF2. Involved in the pathway leading to the degradation of VEGFR-2/KDFR, independently of its ubiquitin-ligase activity. Part of a signaling complex composed of NEDD4, RAP2A and TNIK which regulates neuronal dendrite extension and arborization during development. Ubiquitinates TNK2 and regulates EGF-induced degradation of EGFR and TNF2. Ubiquitinates BRAT1 and this ubiquitination is enhanced in the presence of NDFIP1. Ubiquitinates DAZAP2, leading to its proteasomal degradation. Ubiquitinates POLR2A. Functions as a platform to recruit USP13 to form an NEDD4-USP13 deubiquitination complex that plays a critical role in cleaving the 'Lys-48'-linked ubiquitin chains of VPS34 and then stabilizing VPS34, thus promoting the formation of autophagosomes. In Mus musculus (Mouse), this protein is E3 ubiquitin-protein ligase NEDD4 (Nedd4).